We begin with the raw amino-acid sequence, 364 residues long: tRNA 2-selenouridine synthase (364 aa).

The region spanning 14–137 is the Rhodanese domain; the sequence is LLADTPLIDV…LRQTAIQATW (124 aa). Cys-97 serves as the catalytic S-selanylcysteine intermediate. Position 149 (Gly-149) interacts with (2E)-geranyl diphosphate.

This sequence belongs to the SelU family. In terms of assembly, monomer.

It carries out the reaction 5-methylaminomethyl-2-thiouridine(34) in tRNA + selenophosphate + (2E)-geranyl diphosphate + H2O + H(+) = 5-methylaminomethyl-2-selenouridine(34) in tRNA + (2E)-thiogeraniol + phosphate + diphosphate. The enzyme catalyses 5-methylaminomethyl-2-thiouridine(34) in tRNA + (2E)-geranyl diphosphate = 5-methylaminomethyl-S-(2E)-geranyl-thiouridine(34) in tRNA + diphosphate. It catalyses the reaction 5-methylaminomethyl-S-(2E)-geranyl-thiouridine(34) in tRNA + selenophosphate + H(+) = 5-methylaminomethyl-2-(Se-phospho)selenouridine(34) in tRNA + (2E)-thiogeraniol. The catalysed reaction is 5-methylaminomethyl-2-(Se-phospho)selenouridine(34) in tRNA + H2O = 5-methylaminomethyl-2-selenouridine(34) in tRNA + phosphate. Functionally, involved in the post-transcriptional modification of the uridine at the wobble position (U34) of tRNA(Lys), tRNA(Glu) and tRNA(Gln). Catalyzes the conversion of 2-thiouridine (S2U-RNA) to 2-selenouridine (Se2U-RNA). Acts in a two-step process involving geranylation of 2-thiouridine (S2U) to S-geranyl-2-thiouridine (geS2U) and subsequent selenation of the latter derivative to 2-selenouridine (Se2U) in the tRNA chain. The sequence is that of tRNA 2-selenouridine synthase from Salmonella typhimurium (strain LT2 / SGSC1412 / ATCC 700720).